A 170-amino-acid polypeptide reads, in one-letter code: E1B protein, small T-antigen (170 aa).

Belongs to the adenoviridae E1B 19 kDa protein family.

The polypeptide is E1B protein, small T-antigen (Canine adenovirus serotype 2 (CAdV-2)).